The primary structure comprises 669 residues: Cysteine-rich receptor-like protein kinase 10 (669 aa).

The signal sequence occupies residues 1–34; sequence MRRNTDQESPIMSYYSSFFFLFLFSFLTSFRVSA. Over 35 to 285 the chain is Extracellular; sequence QDPTYVYHTC…PRSGKDGNSK (251 aa). Gnk2-homologous domains lie at 38–142 and 148–252; these read TYVY…NQNI and TTGG…IYAF. 4 N-linked (GlcNAc...) asparagine glycosylation sites follow: asparagine 49, asparagine 53, asparagine 71, and asparagine 80. 2 disulfides stabilise this stretch: cysteine 96–cysteine 105 and cysteine 108–cysteine 133. 4 N-linked (GlcNAc...) asparagine glycosylation sites follow: asparagine 114, asparagine 159, asparagine 185, and asparagine 196. Disulfide bonds link cysteine 209–cysteine 218 and cysteine 221–cysteine 243. Positions 260-274 are enriched in pro residues; sequence PPPPPPSISTPPVSA. The interval 260-280 is disordered; sequence PPPPPPSISTPPVSAPPRSGK. A helical membrane pass occupies residues 286-306; the sequence is VLVIAIVVPIIVAVLLFIAGY. Residues 307–669 lie on the Cytoplasmic side of the membrane; that stretch reads CFLTRRARKS…DASITDIHPR (363 aa). The Protein kinase domain occupies 348-634; that stretch reads FVESNKIGQG…TLPVPRQPGL (287 aa). ATP contacts are provided by residues 354–362 and lysine 376; that span reads IGQGGFGEV. At tyrosine 421 the chain carries Phosphotyrosine. Aspartate 473 acts as the Proton acceptor in catalysis. Phosphoserine is present on serine 477. The residue at position 513 (threonine 513) is a Phosphothreonine. Tyrosine 521 carries the post-translational modification Phosphotyrosine.

This sequence belongs to the protein kinase superfamily. Ser/Thr protein kinase family. CRK subfamily. As to quaternary structure, interacts with CRKIP1 (KAPP), CRKIP2 and CRKIP3, three kinase-associated type 2C proteins.

It localises to the membrane. The catalysed reaction is L-seryl-[protein] + ATP = O-phospho-L-seryl-[protein] + ADP + H(+). It carries out the reaction L-threonyl-[protein] + ATP = O-phospho-L-threonyl-[protein] + ADP + H(+). The polypeptide is Cysteine-rich receptor-like protein kinase 10 (CRK10) (Arabidopsis thaliana (Mouse-ear cress)).